The sequence spans 224 residues: Ribonuclease T (224 aa).

Residues 20-194 form the Exonuclease domain; it reads VVIDVETAGF…YDTERTAELF (175 aa). The Mg(2+) site is built by D23, E25, H181, and D186. Residue H181 is the Proton donor/acceptor of the active site.

Belongs to the RNase T family. As to quaternary structure, homodimer. It depends on Mg(2+) as a cofactor.

Functionally, trims short 3' overhangs of a variety of RNA species, leaving a one or two nucleotide 3' overhang. Responsible for the end-turnover of tRNA: specifically removes the terminal AMP residue from uncharged tRNA (tRNA-C-C-A). Also appears to be involved in tRNA biosynthesis. This chain is Ribonuclease T, found in Shewanella putrefaciens (strain CN-32 / ATCC BAA-453).